The following is a 257-amino-acid chain: Hydroxyacylglutathione hydrolase (257 aa).

Zn(2+)-binding residues include histidine 53, histidine 55, aspartate 57, histidine 58, histidine 109, aspartate 126, and histidine 164.

The protein belongs to the metallo-beta-lactamase superfamily. Glyoxalase II family. In terms of assembly, monomer. It depends on Zn(2+) as a cofactor.

The catalysed reaction is an S-(2-hydroxyacyl)glutathione + H2O = a 2-hydroxy carboxylate + glutathione + H(+). It functions in the pathway secondary metabolite metabolism; methylglyoxal degradation; (R)-lactate from methylglyoxal: step 2/2. In terms of biological role, thiolesterase that catalyzes the hydrolysis of S-D-lactoyl-glutathione to form glutathione and D-lactic acid. This is Hydroxyacylglutathione hydrolase from Baumannia cicadellinicola subsp. Homalodisca coagulata.